We begin with the raw amino-acid sequence, 317 residues long: Transaldolase (317 aa).

Lys132 functions as the Schiff-base intermediate with substrate in the catalytic mechanism.

The protein belongs to the transaldolase family. Type 1 subfamily. As to quaternary structure, homodimer.

The protein localises to the cytoplasm. The catalysed reaction is D-sedoheptulose 7-phosphate + D-glyceraldehyde 3-phosphate = D-erythrose 4-phosphate + beta-D-fructose 6-phosphate. It functions in the pathway carbohydrate degradation; pentose phosphate pathway; D-glyceraldehyde 3-phosphate and beta-D-fructose 6-phosphate from D-ribose 5-phosphate and D-xylulose 5-phosphate (non-oxidative stage): step 2/3. In terms of biological role, transaldolase is important for the balance of metabolites in the pentose-phosphate pathway. This is Transaldolase from Shigella dysenteriae serotype 1 (strain Sd197).